A 126-amino-acid chain; its full sequence is Glycine cleavage system H protein (126 aa).

The Lipoyl-binding domain occupies 23–104 (TLTVGITDHA…PYDNWLFKIK (82 aa)). Lys-64 carries the N6-lipoyllysine modification.

The protein belongs to the GcvH family. The glycine cleavage system is composed of four proteins: P, T, L and H. (R)-lipoate is required as a cofactor.

In terms of biological role, the glycine cleavage system catalyzes the degradation of glycine. The H protein shuttles the methylamine group of glycine from the P protein to the T protein. The polypeptide is Glycine cleavage system H protein (Paraburkholderia phymatum (strain DSM 17167 / CIP 108236 / LMG 21445 / STM815) (Burkholderia phymatum)).